The following is a 430-amino-acid chain: 3-phosphoshikimate 1-carboxyvinyltransferase (430 aa).

Positions 25, 26, and 30 each coordinate 3-phosphoshikimate. K25 serves as a coordination point for phosphoenolpyruvate. Phosphoenolpyruvate-binding residues include G98 and R126. 3-phosphoshikimate contacts are provided by S169, S170, Q171, S198, E313, and H342. Q171 is a phosphoenolpyruvate binding site. E313 (proton acceptor) is an active-site residue. The phosphoenolpyruvate site is built by R346, R387, and K412.

It belongs to the EPSP synthase family. In terms of assembly, monomer.

It localises to the cytoplasm. It carries out the reaction 3-phosphoshikimate + phosphoenolpyruvate = 5-O-(1-carboxyvinyl)-3-phosphoshikimate + phosphate. It participates in metabolic intermediate biosynthesis; chorismate biosynthesis; chorismate from D-erythrose 4-phosphate and phosphoenolpyruvate: step 6/7. Its function is as follows. Catalyzes the transfer of the enolpyruvyl moiety of phosphoenolpyruvate (PEP) to the 5-hydroxyl of shikimate-3-phosphate (S3P) to produce enolpyruvyl shikimate-3-phosphate and inorganic phosphate. This is 3-phosphoshikimate 1-carboxyvinyltransferase from Mycobacterium leprae (strain TN).